The chain runs to 130 residues: Ribosome-binding factor A (130 aa).

This sequence belongs to the RbfA family. Monomer. Binds 30S ribosomal subunits, but not 50S ribosomal subunits or 70S ribosomes.

Its subcellular location is the cytoplasm. Its function is as follows. One of several proteins that assist in the late maturation steps of the functional core of the 30S ribosomal subunit. Associates with free 30S ribosomal subunits (but not with 30S subunits that are part of 70S ribosomes or polysomes). Required for efficient processing of 16S rRNA. May interact with the 5'-terminal helix region of 16S rRNA. This Roseiflexus castenholzii (strain DSM 13941 / HLO8) protein is Ribosome-binding factor A.